Consider the following 434-residue polypeptide: Nicotinate phosphoribosyltransferase (434 aa).

Histidine 242 carries the post-translational modification Phosphohistidine; by autocatalysis.

This sequence belongs to the NAPRTase family. Post-translationally, transiently phosphorylated on a His residue during the reaction cycle. Phosphorylation strongly increases the affinity for substrates and increases the rate of nicotinate D-ribonucleotide production. Dephosphorylation regenerates the low-affinity form of the enzyme, leading to product release.

It carries out the reaction nicotinate + 5-phospho-alpha-D-ribose 1-diphosphate + ATP + H2O = nicotinate beta-D-ribonucleotide + ADP + phosphate + diphosphate. It participates in cofactor biosynthesis; NAD(+) biosynthesis; nicotinate D-ribonucleotide from nicotinate: step 1/1. Functionally, catalyzes the synthesis of beta-nicotinate D-ribonucleotide from nicotinate and 5-phospho-D-ribose 1-phosphate at the expense of ATP. This Bartonella quintana (strain Toulouse) (Rochalimaea quintana) protein is Nicotinate phosphoribosyltransferase.